We begin with the raw amino-acid sequence, 544 residues long: Chaperonin GroEL 2 (544 aa).

ATP-binding positions include 29-32 (TLGP), 86-90 (DGTTT), Gly413, 482-484 (NVL), and Asp498.

It belongs to the chaperonin (HSP60) family. In terms of assembly, forms a cylinder of 14 subunits composed of two heptameric rings stacked back-to-back. Interacts with the co-chaperonin GroES.

The protein resides in the cytoplasm. The enzyme catalyses ATP + H2O + a folded polypeptide = ADP + phosphate + an unfolded polypeptide.. Together with its co-chaperonin GroES, plays an essential role in assisting protein folding. The GroEL-GroES system forms a nano-cage that allows encapsulation of the non-native substrate proteins and provides a physical environment optimized to promote and accelerate protein folding. The sequence is that of Chaperonin GroEL 2 from Roseiflexus sp. (strain RS-1).